A 419-amino-acid chain; its full sequence is D-amino acid dehydrogenase (419 aa).

An FAD-binding site is contributed by 3-17; it reads VIVLGSGVIGVASAY.

The protein belongs to the DadA oxidoreductase family. It depends on FAD as a cofactor.

The enzyme catalyses a D-alpha-amino acid + A + H2O = a 2-oxocarboxylate + AH2 + NH4(+). Its pathway is amino-acid degradation; D-alanine degradation; NH(3) and pyruvate from D-alanine: step 1/1. Its function is as follows. Oxidative deamination of D-amino acids. This Acinetobacter baylyi (strain ATCC 33305 / BD413 / ADP1) protein is D-amino acid dehydrogenase.